The sequence spans 317 residues: Ribonuclease H2 subunit A (317 aa).

In terms of domain architecture, RNase H type-2 spans 43 to 270 (PCCLGVDEAG…AKDMLETKGG (228 aa)). The a divalent metal cation site is built by aspartate 49, glutamate 50, and aspartate 166.

The protein belongs to the RNase HII family. Eukaryotic subfamily. Requires Mn(2+) as cofactor. Mg(2+) serves as cofactor.

The catalysed reaction is Endonucleolytic cleavage to 5'-phosphomonoester.. In terms of biological role, endonuclease that specifically degrades the RNA of RNA-DNA hybrids. Participates in DNA replication. This is Ribonuclease H2 subunit A (rnh-201) from Neurospora crassa (strain ATCC 24698 / 74-OR23-1A / CBS 708.71 / DSM 1257 / FGSC 987).